The chain runs to 413 residues: Putative F-box protein At3g58820 (413 aa).

In terms of domain architecture, F-box spans 1 to 48 (MDGVSSLPNELLCHILSFLTTKEAALTSILSKRWRNLIAFVPNLYIDD).

This chain is Putative F-box protein At3g58820, found in Arabidopsis thaliana (Mouse-ear cress).